The chain runs to 430 residues: Adenylosuccinate synthetase (430 aa).

Residues 13–19 (GDEGKGK) and 41–43 (GHT) contribute to the GTP site. Asp14 (proton acceptor) is an active-site residue. Positions 14 and 41 each coordinate Mg(2+). IMP-binding positions include 14–17 (DEGK), 39–42 (NAGH), Thr130, Arg144, Gln225, Thr240, and Arg304. The Proton donor role is filled by His42. Position 300-306 (300-306 (ASTGRPR)) interacts with substrate. GTP is bound by residues Arg306, 332–334 (KLD), and 414–416 (STG).

It belongs to the adenylosuccinate synthetase family. Homodimer. It depends on Mg(2+) as a cofactor.

It localises to the cytoplasm. It catalyses the reaction IMP + L-aspartate + GTP = N(6)-(1,2-dicarboxyethyl)-AMP + GDP + phosphate + 2 H(+). It functions in the pathway purine metabolism; AMP biosynthesis via de novo pathway; AMP from IMP: step 1/2. Its function is as follows. Plays an important role in the de novo pathway of purine nucleotide biosynthesis. Catalyzes the first committed step in the biosynthesis of AMP from IMP. This is Adenylosuccinate synthetase from Xanthomonas campestris pv. campestris (strain 8004).